The sequence spans 65 residues: Small, acid-soluble spore protein C3 (65 aa).

Belongs to the alpha/beta-type SASP family.

SASP are bound to spore DNA. They are double-stranded DNA-binding proteins that cause DNA to change to an a-like conformation. They protect the DNA backbone from chemical and enzymatic cleavage and are thus involved in dormant spore's high resistance to UV light. In Priestia megaterium (Bacillus megaterium), this protein is Small, acid-soluble spore protein C3 (SASP-C3).